Reading from the N-terminus, the 269-residue chain is Membrane protein insertase YidC 1 (269 aa).

An N-terminal signal peptide occupies residues 1–20 (MKKKFSLIAMAGAALLLLTA). Cys-21 is lipidated: N-palmitoyl cysteine. Cys-21 is lipidated: S-diacylglycerol cysteine. A run of 4 helical transmembrane segments spans residues 45–65 (IRFL…TIVI), 124–144 (YMGC…YQAL), 165–185 (PTFI…YLMM), and 203–223 (PIFI…YWVI).

It belongs to the OXA1/ALB3/YidC family. Type 2 subfamily.

It is found in the cell membrane. Required for the insertion and/or proper folding and/or complex formation of integral membrane proteins into the membrane. Involved in integration of membrane proteins that insert both dependently and independently of the Sec translocase complex, as well as at least some lipoproteins. The sequence is that of Membrane protein insertase YidC 1 from Lactococcus lactis subsp. lactis (strain IL1403) (Streptococcus lactis).